A 157-amino-acid chain; its full sequence is Ciliary microtubule inner protein 5 (157 aa).

Disordered regions lie at residues 1-57 (MGSR…SALG) and 92-124 (DPMGNKKEPVKLPDHVPRFSDTVPNSTNRAVGS). The segment covering 92 to 109 (DPMGNKKEPVKLPDHVPR) has biased composition (basic and acidic residues).

It localises to the cell projection. It is found in the cilium. The sequence is that of Ciliary microtubule inner protein 5 (CIMIP5) from Bos taurus (Bovine).